The following is a 72-amino-acid chain: Translation initiation factor IF-1 (72 aa).

An S1-like domain is found at 2–72 (AKDDVIEVEG…TRGRITYRYK (71 aa)). Y60 bears the Phosphotyrosine mark.

Belongs to the IF-1 family. As to quaternary structure, component of the 30S ribosomal translation pre-initiation complex which assembles on the 30S ribosome in the order IF-2 and IF-3, IF-1 and N-formylmethionyl-tRNA(fMet); mRNA recruitment can occur at any time during PIC assembly.

Its subcellular location is the cytoplasm. One of the essential components for the initiation of protein synthesis. Stabilizes the binding of IF-2 and IF-3 on the 30S subunit to which N-formylmethionyl-tRNA(fMet) subsequently binds. Helps modulate mRNA selection, yielding the 30S pre-initiation complex (PIC). Upon addition of the 50S ribosomal subunit IF-1, IF-2 and IF-3 are released leaving the mature 70S translation initiation complex. The polypeptide is Translation initiation factor IF-1 (Bacillus subtilis (strain 168)).